Consider the following 186-residue polypeptide: UPF0301 protein Sfri_2850 (186 aa).

Belongs to the UPF0301 (AlgH) family.

The chain is UPF0301 protein Sfri_2850 from Shewanella frigidimarina (strain NCIMB 400).